The chain runs to 249 residues: Hydroxyacylglutathione hydrolase (249 aa).

Positions 53, 55, 57, 58, 110, 127, and 165 each coordinate Zn(2+).

Belongs to the metallo-beta-lactamase superfamily. Glyoxalase II family. Monomer. It depends on Zn(2+) as a cofactor.

It carries out the reaction an S-(2-hydroxyacyl)glutathione + H2O = a 2-hydroxy carboxylate + glutathione + H(+). It functions in the pathway secondary metabolite metabolism; methylglyoxal degradation; (R)-lactate from methylglyoxal: step 2/2. In terms of biological role, thiolesterase that catalyzes the hydrolysis of S-D-lactoyl-glutathione to form glutathione and D-lactic acid. This is Hydroxyacylglutathione hydrolase from Buchnera aphidicola subsp. Baizongia pistaciae (strain Bp).